Consider the following 352-residue polypeptide: Guanidino acid hydrolase, mitochondrial (352 aa).

Residues 1 to 35 (MLRLLASGCARGPGPGVGARPAAGLFHPGRRQSRQ) constitute a mitochondrion transit peptide. The tract at residues 11–49 (RGPGPGVGARPAAGLFHPGRRQSRQASDAPRNQPPSPEF) is disordered. Mn(2+) is bound by residues His162, Asp185, His187, and Asp189. The residue at position 193 (Lys193) is an N6-acetyllysine. At Lys217 the chain carries N6-acetyllysine; alternate. Lys217 is modified (N6-succinyllysine; alternate). Positions 276 and 278 each coordinate Mn(2+).

Belongs to the ureohydrolase superfamily. Arginase family. Mn(2+) is required as a cofactor. In terms of tissue distribution, highly expressed in liver and kidney. Also found in skeletal muscle, fetal liver, brain, testis, skin and the gastrointestinal tract. Within brain, expression is higher in the cerebral cortex with lower levels in the medulla and spinal cord.

The protein localises to the mitochondrion. The enzyme catalyses 3-guanidinopropanoate + H2O = urea + beta-alanine. It catalyses the reaction 4-guanidinobutanoate + H2O = urea + 4-aminobutanoate. It carries out the reaction taurocyamine + H2O = urea + taurine. The catalysed reaction is L-arginine + H2O = urea + L-ornithine. Its pathway is nitrogen metabolism; urea cycle; L-ornithine and urea from L-arginine: step 1/1. Functionally, hydrolyzes linear guanidino acids to form urea and the corresponding amines. Displays specificity for substrates having a negatively charged head group and short chains including taurocyamine, guanidino propanoic and butanoic acids. May protect cells by detoxifying potentially harmful amounts of guanidino acids. Metabolizes L-arginine with low efficiency. This chain is Guanidino acid hydrolase, mitochondrial (AGMAT), found in Homo sapiens (Human).